The following is a 499-amino-acid chain: Putative antiporter subunit mnhD2 (499 aa).

Transmembrane regions (helical) follow at residues 3-23 (SNLL…LVFT), 32-52 (ILYI…LIYV), 78-98 (LSLV…SYGF), 108-128 (YYLP…FLTS), 130-150 (LFNL…LVTL), 161-181 (IIYV…IGLL), 206-226 (IIII…LVLF), 240-260 (LAAL…IRFF), 273-293 (PLLV…VIAY), 308-328 (IGFV…GAIF), 330-350 (LAND…LVYM), 368-388 (FFGV…PFSG), 403-423 (GNFI…YSLF), and 450-470 (TILG…PVVM).

Belongs to the CPA3 antiporters (TC 2.A.63) subunit D family. As to quaternary structure, may form a heterooligomeric complex that consists of seven subunits: mnhA2, mnhB2, mnhC2, mnhD2, mnhE2, mnhF2 and mnhG2.

The protein resides in the cell membrane. The sequence is that of Putative antiporter subunit mnhD2 (mnhD2) from Staphylococcus haemolyticus (strain JCSC1435).